Consider the following 190-residue polypeptide: NADH-ubiquinone oxidoreductase chain 5 (190 aa).

6 helical membrane passes run methionine 1–valine 21, isoleucine 68–leucine 88, asparagine 94–phenylalanine 114, phenylalanine 118–leucine 138, asparagine 146–serine 166, and leucine 167–methionine 187.

The protein belongs to the complex I subunit 5 family.

The protein resides in the mitochondrion inner membrane. It carries out the reaction a ubiquinone + NADH + 5 H(+)(in) = a ubiquinol + NAD(+) + 4 H(+)(out). In terms of biological role, core subunit of the mitochondrial membrane respiratory chain NADH dehydrogenase (Complex I) that is believed to belong to the minimal assembly required for catalysis. Complex I functions in the transfer of electrons from NADH to the respiratory chain. The immediate electron acceptor for the enzyme is believed to be ubiquinone. In Arbacia lixula (Black urchin), this protein is NADH-ubiquinone oxidoreductase chain 5 (ND5).